We begin with the raw amino-acid sequence, 360 residues long: Chorismate synthase (360 aa).

Arginine 48 is a binding site for NADP(+). Residues 125–127, 242–243, glycine 286, 301–305, and arginine 327 contribute to the FMN site; these read RSS, NA, and KPTSS.

This sequence belongs to the chorismate synthase family. In terms of assembly, homotetramer. FMNH2 serves as cofactor.

The enzyme catalyses 5-O-(1-carboxyvinyl)-3-phosphoshikimate = chorismate + phosphate. Its pathway is metabolic intermediate biosynthesis; chorismate biosynthesis; chorismate from D-erythrose 4-phosphate and phosphoenolpyruvate: step 7/7. Functionally, catalyzes the anti-1,4-elimination of the C-3 phosphate and the C-6 proR hydrogen from 5-enolpyruvylshikimate-3-phosphate (EPSP) to yield chorismate, which is the branch point compound that serves as the starting substrate for the three terminal pathways of aromatic amino acid biosynthesis. This reaction introduces a second double bond into the aromatic ring system. The protein is Chorismate synthase of Pelagibacter ubique (strain HTCC1062).